A 264-amino-acid polypeptide reads, in one-letter code: Tetraspanin-12 (264 aa).

Topologically, residues 1-13 (MLRLSNAAVITTN) are cytoplasmic. A helical membrane pass occupies residues 14 to 34 (AILALIGLAALSFSVYVYVQG). Over 35-45 (PSQCQRFVQNP) the chain is Extracellular. The helical transmembrane segment at 46 to 66 (LIVTAALLFFISSLGLIAALY) threads the bilayer. Residues 67–75 (GSHIIITLY) lie on the Cytoplasmic side of the membrane. A helical transmembrane segment spans residues 76–96 (LFFLFLSILLLLVLSVFIFLV). Over 97–228 (TNPTAGKALS…VLKGIRKRWR (132 aa)) the chain is Extracellular. The N-linked (GlcNAc...) asparagine glycan is linked to Asn-180. The helical transmembrane segment at 229-249 (ILIVVNLLLILLVVFLYSCGC) threads the bilayer. Topologically, residues 250–264 (CVRKNNRVPWKRRFF) are cytoplasmic.

This sequence belongs to the tetraspanin (TM4SF) family.

The protein localises to the membrane. Its function is as follows. May be involved in the regulation of cell differentiation. This Arabidopsis thaliana (Mouse-ear cress) protein is Tetraspanin-12 (TET12).